A 723-amino-acid polypeptide reads, in one-letter code: Beta-xylosidase (723 aa).

An N-terminal signal peptide occupies residues 1-19 (MKKLWLMGLLLASFFTTVA).

Belongs to the glycosyl hydrolase 3 family.

It localises to the periplasm. Xylosidase involved in ulvan degradation. Ulvan is the main polysaccharide component of the Ulvales (green seaweed) cell wall. It is composed of disaccharide building blocks comprising 3-sulfated rhamnose (Rha3S) linked to D-glucuronic acid (GlcA), L-iduronic acid (IduA), or D-xylose (Xyl). Beta-xylosidase converts Xyl-Rha3S, a product of alpha-L-rhamnosidase acting on Rha-Xyl-Rha3S oligosaccharides, further to Xyl and Rha3S. The enzyme is able to degrade 4-methylumbelliferyl-beta-D-xylopyranoside (MUX) in vitro. In Formosa agariphila (strain DSM 15362 / KCTC 12365 / LMG 23005 / KMM 3901 / M-2Alg 35-1), this protein is Beta-xylosidase.